A 73-amino-acid polypeptide reads, in one-letter code: Signaling peptide TAXIMIN 2 (73 aa).

The first 27 residues, 1–27 (MGDCRPLGFLIGLPFALVALVLALVGA), serve as a signal peptide directing secretion.

Confined to the vasculature of various organs, including seedling roots, leaves, cotyledons, sepals and petals. Also accumulates in root hair cells.

The protein localises to the secreted. Signaling peptide involved in the regulation of lateral organs separation. The chain is Signaling peptide TAXIMIN 2 from Arabidopsis thaliana (Mouse-ear cress).